Consider the following 61-residue polypeptide: Small venom protein 1 (61 aa).

A signal peptide spans 1–20 (MRCVAIFLVVICAFVLQALA).

Expressed by the venom gland.

It is found in the secreted. The chain is Small venom protein 1 from Pimpla hypochondriaca (Parasitoid wasp).